The following is a 522-amino-acid chain: Transactivator/viroplasmin protein (522 aa).

A compositionally biased stretch (basic and acidic residues) spans 487–500; that stretch reads KDASTDRGTTDKDG. The tract at residues 487-522 is disordered; sequence KDASTDRGTTDKDGPPPTRSIVEKEDVPTTSSKQVD.

This sequence belongs to the caulimoviridae viroplasmin family.

Its subcellular location is the host cytoplasm. Enhances the ribosomal termination-reinitiation event leading to the translation of major open reading frames on the polycistronic viral RNAs. This chain is Transactivator/viroplasmin protein, found in Arabidopsis thaliana (Mouse-ear cress).